Here is a 452-residue protein sequence, read N- to C-terminus: Tubulin beta-2 chain (452 aa).

Q11, E74, S143, V147, T148, G149, N209, and N231 together coordinate GTP. Mg(2+) is bound at residue E74. Residues 431–452 form a disordered region; it reads QEATADDEAEFEEEGEVEGEYD. Over residues 434 to 452 the composition is skewed to acidic residues; the sequence is TADDEAEFEEEGEVEGEYD.

The protein belongs to the tubulin family. As to quaternary structure, dimer of alpha and beta chains. A typical microtubule is a hollow water-filled tube with an outer diameter of 25 nm and an inner diameter of 15 nM. Alpha-beta heterodimers associate head-to-tail to form protofilaments running lengthwise along the microtubule wall with the beta-tubulin subunit facing the microtubule plus end conferring a structural polarity. Microtubules usually have 13 protofilaments but different protofilament numbers can be found in some organisms and specialized cells. The cofactor is Mg(2+).

The protein resides in the cytoplasm. Its subcellular location is the cytoskeleton. Its function is as follows. Tubulin is the major constituent of microtubules, a cylinder consisting of laterally associated linear protofilaments composed of alpha- and beta-tubulin heterodimers. Microtubules grow by the addition of GTP-tubulin dimers to the microtubule end, where a stabilizing cap forms. Below the cap, tubulin dimers are in GDP-bound state, owing to GTPase activity of alpha-tubulin. This chain is Tubulin beta-2 chain, found in Homarus americanus (American lobster).